Reading from the N-terminus, the 346-residue chain is MARLKVGIVFGGSSEEHAVSVKSAQEVARNLDTEKYQPFFVGITKDGAWRLCDGPGQDWENGDCRPVVLSPDRSVHGLLVLEQGQYRSVRLDVVLPVLHGTLGEDGATQGLLELSGIPYVGCDVQSSALCMDKSLAYVVARSAGIATPDFWTVTGDETIDPGRLTYPVFVKPARSGSSFGVSKVCRPEDLATAVESARRYDTKVLIEAAVVGSEVGCAILGNDPDLIVGEVDRIALSHGFFRIHQEEQPENGSENSTPVVPADIPTEKRSLVQETAKAVYRALGCRGLSRVDMFLKEDGEVVLNEVNTLPGMTSYSRYPRMMAAAGLPLSEVIDRTLSLALTGKLR.

Positions 137-338 constitute an ATP-grasp domain; sequence YVVARSAGIA…LSEVIDRTLS (202 aa). ATP is bound at residue 163 to 216; that stretch reads RLTYPVFVKPARSGSSFGVSKVCRPEDLATAVESARRYDTKVLIEAAVVGSEVG. Residues aspartate 292, glutamate 305, and asparagine 307 each contribute to the Mg(2+) site.

It belongs to the D-alanine--D-alanine ligase family. Mg(2+) is required as a cofactor. Mn(2+) serves as cofactor.

It is found in the cell membrane. Functionally, required for resistance to glycopeptides antibiotics. D-Ala--D-Ala ligase of altered specificity which catalyzes ester bond formation between D-Ala and various D-hydroxy acids; producing a peptidoglycan which does not terminate by D-alanine but by D-lactate, thus preventing vancomycin binding. This is Putative D-alanine--D-lactate ligase from Streptomyces coelicolor (strain ATCC BAA-471 / A3(2) / M145).